The primary structure comprises 361 residues: GDP-mannose 4,6 dehydratase 1 (361 aa).

Residues 23–28 (GITGQD), 79–80 (DL), 101–105 (LAAQS), and Y116 each bind NADP(+). S150 is an active-site residue. Residues E152 and Y173 each act as nucleophile in the active site. K177, H203, and R208 together coordinate NADP(+).

It belongs to the NAD(P)-dependent epimerase/dehydratase family. GDP-mannose 4,6-dehydratase subfamily. In terms of assembly, homotetramer. The cofactor is NADP(+). In terms of tissue distribution, expressed in roots,stipules and pollen just before anthesis. Primarily localized to the root meristem and columella root cap. Not expressed in emerging lateral roots.

The enzyme catalyses GDP-alpha-D-mannose = GDP-4-dehydro-alpha-D-rhamnose + H2O. Its pathway is nucleotide-sugar biosynthesis; GDP-L-fucose biosynthesis via de novo pathway; GDP-L-fucose from GDP-alpha-D-mannose: step 1/2. In terms of biological role, catalyzes the conversion of GDP-D-mannose to GDP-4-dehydro-6-deoxy-D-mannose. This Arabidopsis thaliana (Mouse-ear cress) protein is GDP-mannose 4,6 dehydratase 1 (GMD1).